A 1024-amino-acid polypeptide reads, in one-letter code: Importin-8 (1024 aa).

Residues 22–102 (AENELNQSYK…RENMVEAIIR (81 aa)) enclose the Importin N-terminal domain. The disordered stretch occupies residues 896–969 (FGRAQGSEEE…YSTPLDCDNG (74 aa)). Composition is skewed to acidic residues over residues 902-917 (SEEEENEEIPSDEDEV) and 934-952 (DNEDDDDEDDDEYWDDEGL).

The protein belongs to the importin beta family.

It is found in the cytoplasm. It localises to the nucleus. Its function is as follows. Involved in nuclear protein import, either by acting as autonomous nuclear transport receptor or as an adapter-like protein in association with the importin-beta subunit KPNB1. Acting autonomously, may serve as receptor for nuclear localization signals (NLS) and promote translocation of import substrates through the nuclear pore complex (NPC) by an energy requiring, Ran-dependent mechanism. At the nucleoplasmic side of the NPC, Ran binds to importin, the importin/substrate complex dissociates and importin is re-exported from the nucleus to the cytoplasm where GTP hydrolysis releases Ran. The directionality of nuclear import is thought to be conferred by an asymmetric distribution of the GTP- and GDP-bound forms of Ran between the cytoplasm and nucleus. In vitro mediates the nuclear import of the signal recognition particle protein SRP19. May also be involved in cytoplasm-to-nucleus shuttling of a broad spectrum of other cargos, including Argonaute-microRNAs complexes, the JUN protein, RELA/NF-kappa-B p65 subunit, the translation initiation factor EIF4E and a set of receptor-activated mothers against decapentaplegic homolog (SMAD) transcription factors that play a critical role downstream of the large family of transforming growth factor beta and bone morphogenetic protein (BMP) cytokines. The protein is Importin-8 (ipo8) of Danio rerio (Zebrafish).